Consider the following 86-residue polypeptide: Small ribosomal subunit protein bS16 (86 aa).

It belongs to the bacterial ribosomal protein bS16 family.

The polypeptide is Small ribosomal subunit protein bS16 (Stenotrophomonas maltophilia (strain K279a)).